The primary structure comprises 35 residues: Antimicrobial peptide 3 (35 aa).

The Chitin-binding type-1 domain maps to 4 to 35 (GGECGGRFGGCAGGQCCSRFGFCGSGPKYCAH). Disulfide bonds link Cys7/Cys20, Cys14/Cys26, and Cys19/Cys33.

Contains 3 disulfide bonds. As to expression, expressed in leaf, flower, stem and seed with highest expression in leaf (at protein level).

In terms of biological role, has antifungal activity against A.niger (IC(50)=5.4 uM), B.sorokiniana (IC(50)=2.0 uM), B.cinerea (IC(50)=1.6 uM), F.solani (IC(50)=3.7 uM) and A.alternata (IC(50)=5.0 uM). Binds chitin in vitro. Has no antibacterial activity at concentrations up to 10 uM. The sequence is that of Antimicrobial peptide 3 from Stellaria media (Common chickweed).